The following is a 289-amino-acid chain: ATP synthase gamma chain (289 aa).

This sequence belongs to the ATPase gamma chain family. In terms of assembly, F-type ATPases have 2 components, CF(1) - the catalytic core - and CF(0) - the membrane proton channel. CF(1) has five subunits: alpha(3), beta(3), gamma(1), delta(1), epsilon(1). CF(0) has three main subunits: a, b and c.

The protein localises to the cell inner membrane. Functionally, produces ATP from ADP in the presence of a proton gradient across the membrane. The gamma chain is believed to be important in regulating ATPase activity and the flow of protons through the CF(0) complex. This chain is ATP synthase gamma chain, found in Haemophilus influenzae (strain PittEE).